The primary structure comprises 303 residues: Glutamate formimidoyltransferase (303 aa).

His81 serves as the catalytic For formimidoyltransferase activity. 164–172 (GPSVVGKAG) lines the folate pocket.

The protein belongs to the formiminotransferase family.

It is found in the cytoplasm. The catalysed reaction is (6S)-5-formyl-5,6,7,8-tetrahydrofolate + L-glutamate = N-formyl-L-glutamate + (6S)-5,6,7,8-tetrahydrofolate + H(+). The enzyme catalyses 5-formimidoyltetrahydrofolate + L-glutamate = N-formimidoyl-L-glutamate + (6S)-5,6,7,8-tetrahydrofolate. It carries out the reaction (6S)-5-formyl-5,6,7,8-tetrahydrofolate + ATP = (6R)-5,10-methenyltetrahydrofolate + ADP + phosphate. Its pathway is amino-acid degradation; L-histidine degradation into L-glutamate; L-glutamate from N-formimidoyl-L-glutamate (transferase route): step 1/1. It participates in one-carbon metabolism; tetrahydrofolate interconversion. Catalyzes the transfer of the formyl group from N-formylglutamate to tetrahydrofolate (THF) to yield 5-formyltetrahydrofolate (5-CHO-THF) and glutamate (Glu). The triglutamate form of 5-CHO-THF (5-CHO-THF-Glu3) can also be used as substrate. It can also catalyze the transfer of the formimino group from N-formiminoglutamate to tetrahydrofolate (THF) to yield 5-formiminotetrahydrofolate (5-NH=CH-THF) and glutamate (Glu). It can replace YgfA to catalyze the irreversible ATP-dependent transformation of 5-CHO-THF to form 5,10-methenyltetrahydrofolate (5,10-CH=THF). The protein is Glutamate formimidoyltransferase of Thermoplasma acidophilum (strain ATCC 25905 / DSM 1728 / JCM 9062 / NBRC 15155 / AMRC-C165).